The following is a 307-amino-acid chain: UDP-N-acetylenolpyruvoylglucosamine reductase (307 aa).

In terms of domain architecture, FAD-binding PCMH-type spans 33 to 197 (TGGNADFYIT…LEAAFTLAPG (165 aa)). R176 is an active-site residue. S226 serves as the catalytic Proton donor. E296 is a catalytic residue.

It belongs to the MurB family. FAD serves as cofactor.

Its subcellular location is the cytoplasm. It catalyses the reaction UDP-N-acetyl-alpha-D-muramate + NADP(+) = UDP-N-acetyl-3-O-(1-carboxyvinyl)-alpha-D-glucosamine + NADPH + H(+). It functions in the pathway cell wall biogenesis; peptidoglycan biosynthesis. Its function is as follows. Cell wall formation. The polypeptide is UDP-N-acetylenolpyruvoylglucosamine reductase (Staphylococcus aureus (strain COL)).